Reading from the N-terminus, the 467-residue chain is Trigger factor (467 aa).

A PPIase FKBP-type domain is found at 174–261 (SDIAILTFKG…LQDLKTRELP (88 aa)). The interval 439 to 467 (PKKALNEKVKSSKPKNTQKKTDKTKKDSP) is disordered. The segment covering 457–467 (KKTDKTKKDSP) has biased composition (basic and acidic residues).

The protein belongs to the FKBP-type PPIase family. Tig subfamily.

It localises to the cytoplasm. The enzyme catalyses [protein]-peptidylproline (omega=180) = [protein]-peptidylproline (omega=0). Involved in protein export. Acts as a chaperone by maintaining the newly synthesized protein in an open conformation. Functions as a peptidyl-prolyl cis-trans isomerase. The sequence is that of Trigger factor from Prochlorococcus marinus (strain SARG / CCMP1375 / SS120).